Here is an 876-residue protein sequence, read N- to C-terminus: Valine--tRNA ligase (876 aa).

A 'HIGH' region motif is present at residues proline 44–histidine 54. The 'KMSKS' region motif lies at lysine 520–serine 524. Lysine 523 is a binding site for ATP. Residues leucine 805 to alanine 876 are a coiled coil.

This sequence belongs to the class-I aminoacyl-tRNA synthetase family. ValS type 1 subfamily. As to quaternary structure, monomer.

The protein resides in the cytoplasm. It catalyses the reaction tRNA(Val) + L-valine + ATP = L-valyl-tRNA(Val) + AMP + diphosphate. Its function is as follows. Catalyzes the attachment of valine to tRNA(Val). As ValRS can inadvertently accommodate and process structurally similar amino acids such as threonine, to avoid such errors, it has a 'posttransfer' editing activity that hydrolyzes mischarged Thr-tRNA(Val) in a tRNA-dependent manner. This is Valine--tRNA ligase from Staphylococcus aureus (strain Mu3 / ATCC 700698).